Consider the following 930-residue polypeptide: Translation initiation factor IF-2 (930 aa).

Low complexity predominate over residues 50-67; sequence FKPAAAPKVEAKPAAPKV. Disordered regions lie at residues 50-217 and 260-346; these read FKPA…SSEE and EVVP…HELP. 2 stretches are compositionally biased toward basic and acidic residues: residues 68-90 and 110-125; these read SAEK…EAKP and FKAE…AERR. Over residues 129–141 the composition is skewed to low complexity; it reads KGNNRDQQQNGNR. 2 stretches are compositionally biased toward basic and acidic residues: residues 157–167 and 262–295; these read RDNRRFNDQAK and VPEK…DGPR. Low complexity predominate over residues 309–318; that stretch reads NQKNSNWNNN. Residues 337 to 346 are compositionally biased toward basic and acidic residues; the sequence is VTERKFHELP. Residues 432 to 599 form the tr-type G domain; that stretch reads ERPPVVTIMG…TVLLVAEIQE (168 aa). The G1 stretch occupies residues 441–448; sequence GHVDHGKT. 441 to 448 contributes to the GTP binding site; the sequence is GHVDHGKT. Residues 466-470 form a G2 region; that stretch reads GITQH. The tract at residues 487–490 is G3; that stretch reads DTPG. Residues 487 to 491 and 541 to 544 contribute to the GTP site; these read DTPGH and NKID. The tract at residues 541–544 is G4; the sequence is NKID. Residues 577-579 are G5; that stretch reads SAK.

It belongs to the TRAFAC class translation factor GTPase superfamily. Classic translation factor GTPase family. IF-2 subfamily.

The protein resides in the cytoplasm. Its function is as follows. One of the essential components for the initiation of protein synthesis. Protects formylmethionyl-tRNA from spontaneous hydrolysis and promotes its binding to the 30S ribosomal subunits. Also involved in the hydrolysis of GTP during the formation of the 70S ribosomal complex. The protein is Translation initiation factor IF-2 of Streptococcus pneumoniae (strain Taiwan19F-14).